Reading from the N-terminus, the 648-residue chain is L-aspartate oxidase 2-b, chloroplastic (648 aa).

Residues 98-101, Lys120, 127-134, and Asp298 contribute to the FAD site; these read SGIA and STNYAQGG. Arg373 serves as the catalytic Proton donor/acceptor. FAD is bound by residues Glu458 and 474–475; that span reads SL.

It belongs to the FAD-dependent oxidoreductase 2 family. NadB subfamily. FAD serves as cofactor.

The protein localises to the plastid. Its subcellular location is the chloroplast. It carries out the reaction L-aspartate + O2 = iminosuccinate + H2O2. It participates in alkaloid biosynthesis; nicotine biosynthesis. It functions in the pathway cofactor biosynthesis; NAD(+) biosynthesis; iminoaspartate from L-aspartate (oxidase route): step 1/1. Involved in the biosynthesis of pyridine alkaloid natural products, leading mainly to the production of anabasine, anatabine, nicotine and nornicotine, effective deterrents against herbivores with antiparasitic and pesticide properties (neurotoxins); nornicotine serves as the precursor in the synthesis of the carcinogen compound N'-nitrosonornicotine (NNN). Catalyzes the oxidation of L-aspartate to iminoaspartate. The sequence is that of L-aspartate oxidase 2-b, chloroplastic from Nicotiana tabacum (Common tobacco).